The following is a 487-amino-acid chain: Glutamate--tRNA ligase 2 (487 aa).

Positions 24 to 34 (PSPTGFLHIGG) match the 'HIGH' region motif. The 'KMSKS' region signature appears at 258-262 (KLSKR). ATP is bound at residue Lys261.

It belongs to the class-I aminoacyl-tRNA synthetase family. Glutamate--tRNA ligase type 1 subfamily. Monomer.

Its subcellular location is the cytoplasm. It catalyses the reaction tRNA(Glu) + L-glutamate + ATP = L-glutamyl-tRNA(Glu) + AMP + diphosphate. Functionally, catalyzes the attachment of glutamate to tRNA(Glu) in a two-step reaction: glutamate is first activated by ATP to form Glu-AMP and then transferred to the acceptor end of tRNA(Glu). The protein is Glutamate--tRNA ligase 2 of Novosphingobium aromaticivorans (strain ATCC 700278 / DSM 12444 / CCUG 56034 / CIP 105152 / NBRC 16084 / F199).